A 718-amino-acid chain; its full sequence is Sodium/myo-inositol cotransporter (718 aa).

Topologically, residues 1 to 9 (MRAVLETAD) are extracellular. Residues 10 to 29 (IAIVALYFILVMCIGFFAMW) form a helical membrane-spanning segment. The Cytoplasmic segment spans residues 30–38 (KSNRSTVSG). Residues 39–57 (YFLAGRSMTWVAIGASLFV) form a helical membrane-spanning segment. Over 58-86 (SNIGSEHFIGLAGSGAASGFAVGAWEFNA) the chain is Extracellular. The helical transmembrane segment at 87–110 (LLLLQLLGWVFIPIYIRSGVYTMP) threads the bilayer. Topologically, residues 111-123 (EYLSKRFGGHRIQ) are cytoplasmic. The helical transmembrane segment at 124 to 144 (VYFAALSLILYIFTKLSVDLY) threads the bilayer. Residues 145-157 (SGALFIQESLGWN) lie on the Extracellular side of the membrane. The chain crosses the membrane as a helical span at residues 158-183 (LYVSVILLIGMTALLTVTGGLVAVIY). Topologically, residues 184–186 (TDT) are cytoplasmic. The helical transmembrane segment at 187–205 (LQALLMIVGALTLMIISMM) threads the bilayer. Topologically, residues 206 to 303 (EIGGFEEVKR…HAKGSTLMAG (98 aa)) are extracellular. An N-linked (GlcNAc...) asparagine glycan is attached at N232. Residues 304 to 324 (FLKLLPMFIIVVPGMISRILF) traverse the membrane as a helical segment. Residues 325 to 353 (ADDIACINPEHCMQVCGSRAGCSNIAYPR) lie on the Cytoplasmic side of the membrane. Residues 354 to 376 (LVMKLVPVGLRGLMMAVMIAALM) form a helical membrane-spanning segment. Over 377-406 (SDLDSIFNSASTIFTLDVYKLIRRSASSRE) the chain is Extracellular. The helical transmembrane segment at 407 to 430 (LMIVGRIFVAFMVVISIAWVPIIV) threads the bilayer. Residues 431–443 (EMQGGQMYLYIQE) lie on the Cytoplasmic side of the membrane. Residues 444-462 (VADYLTPPVAALFLLAIFW) traverse the membrane as a helical segment. Residues 463 to 510 (KRCNEQGAFYGGMAGFVLGAVRLTLAFAYRAPECDQPDNRPGFIKDIH) lie on the Extracellular side of the membrane. A helical transmembrane segment spans residues 511–532 (YMYVATALFWVTGLITVIVSLL). The Cytoplasmic segment spans residues 533–695 (TPPPTKEQIR…QMLEEPPQVK (163 aa)). Residues S594 and S632 each carry the phosphoserine modification. The chain crosses the membrane as a helical span at residues 696–716 (LILNIGLFAVCSLGIFMFVYF). The Extracellular portion of the chain corresponds to 717–718 (SL).

The protein belongs to the sodium:solute symporter (SSF) (TC 2.A.21) family. As to quaternary structure, interacts with KCNQ2 (via the pore module). Interacts with KCNQ1; this interaction is direct. Forms coregulatory complexes with ion channels KCNQ2-KCNQ3 and KCNQ1-KCNE2. In terms of tissue distribution, kidney cortex and medulla.

The protein localises to the apical cell membrane. It localises to the basolateral cell membrane. The enzyme catalyses myo-inositol(out) + 2 Na(+)(out) = myo-inositol(in) + 2 Na(+)(in). The catalysed reaction is scyllo-inositol(out) + 2 Na(+)(out) = scyllo-inositol(in) + 2 Na(+)(in). With respect to regulation, inhibited by phlorizin and phloretin. Its function is as follows. Electrogenic Na(+)-coupled sugar symporter that actively transports myo-inositol and its stereoisomer scyllo-inositol across the plasma membrane, with a Na(+) to sugar coupling ratio of 2:1. Maintains myo-inositol concentration gradient that defines cell volume and fluid balance during osmotic stress, in particular in the fetoplacental unit and central nervous system. Forms coregulatory complexes with voltage-gated K(+) ion channels, allosterically altering ion selectivity, voltage dependence and gating kinetics of the channel. In turn, K(+) efflux through the channel forms a local electrical gradient that modulates electrogenic Na(+)-coupled myo-inositol influx through the transporter. Associates with KCNQ1-KCNE2 channel in the apical membrane of choroid plexus epithelium and regulates the myo-inositol gradient between blood and cerebrospinal fluid with an impact on neuron excitability. Associates with KCNQ2-KCNQ3 channel altering ion selectivity, increasing Na(+) and Cs(+) permeation relative to K(+) permeation. Provides myo-inositol precursor for biosynthesis of phosphoinositides such as PI(4,5)P2, thus indirectly affecting the activity of phosphoinositide-dependent ion channels and Ca(2+) signaling upon osmotic stress. Has very low affinity for sugars such as L-fucose and L-xylose, with an affinity about three orders of magnitude lower than myo-inositol. This Canis lupus familiaris (Dog) protein is Sodium/myo-inositol cotransporter (SLC5A3).